The primary structure comprises 274 residues: Glucosamine-6-phosphate deaminase (274 aa).

Asp-71 acts as the Proton acceptor; for enolization step in catalysis. Asp-140 serves as the catalytic For ring-opening step. His-142 serves as the catalytic Proton acceptor; for ring-opening step. Glu-147 (for ring-opening step) is an active-site residue.

It belongs to the glucosamine/galactosamine-6-phosphate isomerase family. NagB subfamily.

It carries out the reaction alpha-D-glucosamine 6-phosphate + H2O = beta-D-fructose 6-phosphate + NH4(+). Its pathway is amino-sugar metabolism; N-acetylneuraminate degradation; D-fructose 6-phosphate from N-acetylneuraminate: step 5/5. Functionally, catalyzes the reversible isomerization-deamination of glucosamine 6-phosphate (GlcN6P) to form fructose 6-phosphate (Fru6P) and ammonium ion. In Fusobacterium nucleatum subsp. nucleatum (strain ATCC 25586 / DSM 15643 / BCRC 10681 / CIP 101130 / JCM 8532 / KCTC 2640 / LMG 13131 / VPI 4355), this protein is Glucosamine-6-phosphate deaminase.